The primary structure comprises 1174 residues: PR domain zinc finger protein 15 (1174 aa).

An SET domain is found at 75-185; sequence SNLEIRRLDD…AGTELRVWYA (111 aa). Residues 252–307 form a disordered region; that stretch reads LPAGGQQHEAASEKEPDAPRMEPPTAAESKSIQSVMVTKEPKKKPRRGRKPKASKV. Residues 261-271 are compositionally biased toward basic and acidic residues; sequence AASEKEPDAPR. Positions 292-304 are enriched in basic residues; the sequence is PKKKPRRGRKPKA. 2 consecutive C2H2-type zinc fingers follow at residues 402 to 424 and 434 to 457; these read HQCG…VRSH and FKCE…SYKH. A C2H2-type 3; degenerate zinc finger spans residues 468–486; the sequence is YRCGSCGKTFRMESALEFH. 2 consecutive C2H2-type zinc fingers follow at residues 495–517 and 522–544; these read FQCE…KKKH and FACE…QRRH. A Glycyl lysine isopeptide (Lys-Gly) (interchain with G-Cter in SUMO2) cross-link involves residue lysine 552. C2H2-type zinc fingers lie at residues 571–593 and 598–620; these read SGCP…LLTH and YTCE…IHVH. The disordered stretch occupies residues 639 to 658; sequence IGISSEENDDNSDESADSEP. Positions 644-655 are enriched in acidic residues; the sequence is EENDDNSDESAD. C2H2-type zinc fingers lie at residues 661–684, 689–711, 725–747, 753–775, 781–803, 809–831, 837–859, and 865–888; these read YSCK…MEVH, HGCS…MVIH, HPCE…KLIH, HACE…MRVH, YLCA…MKLH, YECK…YKRH, FMCE…KLIH, and WTCS…QLTH. 2 disordered regions span residues 957–1007 and 1147–1174; these read AEGK…GDET and LQPP…MYSY. Positions 962 to 973 are enriched in basic residues; that stretch reads GKAAKRSHKRKQ. Low complexity predominate over residues 1154 to 1174; sequence AAPQQAVQPQVQNEQQQMYSY.

As to expression, expressed in embryonic stem cells (ESCs) (at protein level).

Its subcellular location is the nucleus. Sequence-specific DNA-binding transcriptional regulator. Plays a role as a molecular node in a transcriptional network regulating embryonic development and cell fate decision. Stimulates the expression of upstream key transcriptional activators and repressors of the Wnt/beta-catenin and MAPK/ERK pathways, respectively, that are essential for naive pluripotency and self-renewal maintenance of embryonic stem cells (ESCs). Specifically promotes SPRY1 and RSPO1 transcription activation through recognition and direct binding of a specific DNA sequence in their promoter regions. Also plays a role in induced pluripotent stem cells (iPSCs) reprogramming. Involved in early embryo development. The chain is PR domain zinc finger protein 15 from Mus musculus (Mouse).